The chain runs to 166 residues: NAD(P)H-quinone oxidoreductase subunit I, chloroplastic (166 aa).

4Fe-4S ferredoxin-type domains follow at residues G55–K84 and L95–E124. Residues C64, C67, C70, C74, C104, C107, C110, and C114 each contribute to the [4Fe-4S] cluster site.

This sequence belongs to the complex I 23 kDa subunit family. In terms of assembly, NDH is composed of at least 16 different subunits, 5 of which are encoded in the nucleus. It depends on [4Fe-4S] cluster as a cofactor.

The protein localises to the plastid. Its subcellular location is the chloroplast thylakoid membrane. It carries out the reaction a plastoquinone + NADH + (n+1) H(+)(in) = a plastoquinol + NAD(+) + n H(+)(out). The catalysed reaction is a plastoquinone + NADPH + (n+1) H(+)(in) = a plastoquinol + NADP(+) + n H(+)(out). In terms of biological role, NDH shuttles electrons from NAD(P)H:plastoquinone, via FMN and iron-sulfur (Fe-S) centers, to quinones in the photosynthetic chain and possibly in a chloroplast respiratory chain. The immediate electron acceptor for the enzyme in this species is believed to be plastoquinone. Couples the redox reaction to proton translocation, and thus conserves the redox energy in a proton gradient. The sequence is that of NAD(P)H-quinone oxidoreductase subunit I, chloroplastic from Bahiopsis tomentosa (Tecote).